The chain runs to 37 residues: uncharacterized protein (37 aa).

A helical transmembrane segment spans residues 17-37; that stretch reads TFVLIVVLFILLIIVGAAFIC.

The protein belongs to the SscA family.

Its subcellular location is the membrane. This is an uncharacterized protein from Bacillus subtilis (strain 168).